The chain runs to 77 residues: Probable small nuclear ribonucleoprotein G (77 aa).

The Sm domain maps to 4–76 (THPPELKKYM…VVIMEPKERI (73 aa)).

Belongs to the snRNP Sm proteins family. Core component of the spliceosomal U1, U2, U4 and U5 small nuclear ribonucleoproteins (snRNPs), the building blocks of the spliceosome.

Its subcellular location is the cytoplasm. The protein resides in the cytosol. The protein localises to the nucleus. Its function is as follows. Plays a role in pre-mRNA splicing as a core component of the spliceosomal U1, U2, U4 and U5 small nuclear ribonucleoproteins (snRNPs), the building blocks of the spliceosome. The sequence is that of Probable small nuclear ribonucleoprotein G (snr-7) from Caenorhabditis elegans.